The chain runs to 78 residues: Large ribosomal subunit protein bL31 (78 aa).

Cys-16, Cys-18, Cys-38, and Cys-41 together coordinate Zn(2+).

It belongs to the bacterial ribosomal protein bL31 family. Type A subfamily. As to quaternary structure, part of the 50S ribosomal subunit. The cofactor is Zn(2+).

In terms of biological role, binds the 23S rRNA. The polypeptide is Large ribosomal subunit protein bL31 (Frankia alni (strain DSM 45986 / CECT 9034 / ACN14a)).